A 133-amino-acid chain; its full sequence is Protein Wnt-4 (133 aa).

S1 carries the O-palmitoleoyl serine; by PORCN lipid modification. 2 disulfide bridges follow: C69-C114 and C99-C109. N100 is a glycosylation site (N-linked (GlcNAc...) asparagine).

This sequence belongs to the Wnt family. Post-translationally, palmitoleoylation is required for efficient binding to frizzled receptors. Depalmitoleoylation leads to Wnt signaling pathway inhibition.

The protein localises to the secreted. Its subcellular location is the extracellular space. It is found in the extracellular matrix. Ligand for members of the frizzled family of seven transmembrane receptors. Plays an important role in embryonic development. This chain is Protein Wnt-4 (WNT-4), found in Strongylocentrotus purpuratus (Purple sea urchin).